The chain runs to 771 residues: U3 small nucleolar RNA-associated protein 14 homolog A (771 aa).

Residues 23-49 (PKDYLLSESEDEGDNDGERKHQKLLEA) form a disordered region. Phosphoserine occurs at positions 29, 31, 52, 77, and 81. A coiled-coil region spans residues 40-67 (ERKHQKLLEAISSLDGKNRRKLAERSEA). Residue lysine 122 forms a Glycyl lysine isopeptide (Lys-Gly) (interchain with G-Cter in SUMO2) linkage. Phosphothreonine is present on threonine 205. 2 coiled-coil regions span residues 216–290 (SLEE…EKAR) and 317–347 (LEAR…EEEE). 2 disordered regions span residues 334–355 (TQKL…DVEE) and 367–557 (MNAD…KKEQ). Over residues 342-355 (ESEEEEGGTEDVEE) the composition is skewed to acidic residues. Over residues 399–436 (LEAHGVSESEGEERPVAEEEILLREFEERRSLRKRSEL) the composition is skewed to basic and acidic residues. Phosphoserine occurs at positions 405 and 407. At arginine 433 the chain carries Citrulline. Phosphoserine occurs at positions 437 and 445. Lysine 449 is covalently cross-linked (Glycyl lysine isopeptide (Lys-Gly) (interchain with G-Cter in SUMO2)). At serine 453 the chain carries Phosphoserine. Residues 504–529 (RPERVQTLEELEELGKEECFQNKELP) show a composition bias toward basic and acidic residues. Lysine 519 participates in a covalent cross-link: Glycyl lysine isopeptide (Lys-Gly) (interchain with G-Cter in SUMO2). The segment covering 535–544 (GQQSERTPNN) has biased composition (polar residues). Positions 547–557 (DAPKEKKKKEQ) are enriched in basic and acidic residues. At serine 569 the chain carries Phosphoserine. At arginine 589 the chain carries Citrulline. Residue lysine 733 forms a Glycyl lysine isopeptide (Lys-Gly) (interchain with G-Cter in SUMO2) linkage. Positions 740–751 (RSSSRSDLSVIQ) are enriched in polar residues. The tract at residues 740–771 (RSSSRSDLSVIQRNPKRITTRHKKQLKKCSVD) is disordered. The span at 753–771 (NPKRITTRHKKQLKKCSVD) shows a compositional bias: basic residues.

It belongs to the UTP14 family. In terms of assembly, interacts with DHX37. In terms of processing, citrullinated by PADI4. In terms of tissue distribution, ubiquitously expressed.

The protein resides in the nucleus. Its subcellular location is the nucleolus. In terms of biological role, may be required for ribosome biogenesis. The polypeptide is U3 small nucleolar RNA-associated protein 14 homolog A (UTP14A) (Homo sapiens (Human)).